The sequence spans 715 residues: Fatty acid oxidation complex subunit alpha (715 aa).

The interval 1 to 190 is enoyl-CoA hydratase; the sequence is MTTTSAFMLN…KAGLVDDVVP (190 aa). The 3-hydroxyacyl-CoA dehydrogenase stretch occupies residues 306–714; it reads GPLNSVGILG…FWTNGETDQG (409 aa).

The protein in the N-terminal section; belongs to the enoyl-CoA hydratase/isomerase family. This sequence in the central section; belongs to the 3-hydroxyacyl-CoA dehydrogenase family. Heterotetramer of two alpha chains (FadJ) and two beta chains (FadI).

The protein resides in the cytoplasm. It catalyses the reaction a (3S)-3-hydroxyacyl-CoA = a (2E)-enoyl-CoA + H2O. The catalysed reaction is a 4-saturated-(3S)-3-hydroxyacyl-CoA = a (3E)-enoyl-CoA + H2O. The enzyme catalyses a (3S)-3-hydroxyacyl-CoA + NAD(+) = a 3-oxoacyl-CoA + NADH + H(+). It carries out the reaction (3S)-3-hydroxybutanoyl-CoA = (3R)-3-hydroxybutanoyl-CoA. Its pathway is lipid metabolism; fatty acid beta-oxidation. In terms of biological role, catalyzes the formation of a hydroxyacyl-CoA by addition of water on enoyl-CoA. Also exhibits 3-hydroxyacyl-CoA epimerase and 3-hydroxyacyl-CoA dehydrogenase activities. This chain is Fatty acid oxidation complex subunit alpha, found in Salmonella choleraesuis (strain SC-B67).